The primary structure comprises 58 residues: Small ribosomal subunit protein bS21 (58 aa).

Basic and acidic residues predominate over residues 32 to 42; sequence IRKREHYEKPS. A disordered region spans residues 32–58; it reads IRKREHYEKPSVKRKKKSEAARKRKFK. Basic residues predominate over residues 43–58; the sequence is VKRKKKSEAARKRKFK.

This sequence belongs to the bacterial ribosomal protein bS21 family.

This is Small ribosomal subunit protein bS21 from Lachnoclostridium phytofermentans (strain ATCC 700394 / DSM 18823 / ISDg) (Clostridium phytofermentans).